Consider the following 277-residue polypeptide: Phosphatidylglycerol--prolipoprotein diacylglyceryl transferase (277 aa).

The next 4 helical transmembrane spans lie at 22–42, 59–79, 107–127, and 133–153; these read ISIR…YIVV, LFFY…CLFY, GYEG…LWLY, and MNYM…ACFI. Arg154 provides a ligand contact to a 1,2-diacyl-sn-glycero-3-phospho-(1'-sn-glycerol). A run of 3 helical transmembrane segments spans residues 186 to 206, 216 to 236, and 251 to 271; these read PAQL…MFLY, GFFF…VEFL, and MGQW…FFYG.

The protein belongs to the Lgt family.

The protein resides in the cell inner membrane. The catalysed reaction is L-cysteinyl-[prolipoprotein] + a 1,2-diacyl-sn-glycero-3-phospho-(1'-sn-glycerol) = an S-1,2-diacyl-sn-glyceryl-L-cysteinyl-[prolipoprotein] + sn-glycerol 1-phosphate + H(+). The protein operates within protein modification; lipoprotein biosynthesis (diacylglyceryl transfer). In terms of biological role, catalyzes the transfer of the diacylglyceryl group from phosphatidylglycerol to the sulfhydryl group of the N-terminal cysteine of a prolipoprotein, the first step in the formation of mature lipoproteins. The sequence is that of Phosphatidylglycerol--prolipoprotein diacylglyceryl transferase from Bacteroides fragilis (strain ATCC 25285 / DSM 2151 / CCUG 4856 / JCM 11019 / LMG 10263 / NCTC 9343 / Onslow / VPI 2553 / EN-2).